A 305-amino-acid polypeptide reads, in one-letter code: Ferredoxin--NADP reductase (305 aa).

Residues Glu31, Tyr42, Val82, and Asp274 each contribute to the FAD site.

Belongs to the ferredoxin--NADP reductase type 2 family. In terms of assembly, homodimer. The cofactor is FAD.

It catalyses the reaction 2 reduced [2Fe-2S]-[ferredoxin] + NADP(+) + H(+) = 2 oxidized [2Fe-2S]-[ferredoxin] + NADPH. The sequence is that of Ferredoxin--NADP reductase from Ignicoccus hospitalis (strain KIN4/I / DSM 18386 / JCM 14125).